The sequence spans 670 residues: Soluble lamin-associated protein of 75 kDa (670 aa).

Disordered regions lie at residues 273 to 301 and 314 to 670; these read PKRP…SSEM and STSE…AKLT. The residue at position 350 (Ser-350) is a Phosphoserine. The segment covering 358–375 has biased composition (polar residues); it reads SQTSLTASINKLESTARP. Residues 378-387 show a composition bias toward acidic residues; sequence SSEEFLEEEP. Residue Ser-379 is modified to Phosphoserine. Residues 414–423 are compositionally biased toward basic and acidic residues; sequence EKQDGEKESE. Residues 442–453 show a composition bias toward acidic residues; the sequence is TEEEDSTSEVLD. At Ser-449 the chain carries Phosphoserine. Over residues 460–470 the composition is skewed to polar residues; that stretch reads PFNSSEDSTNL. 2 stretches are compositionally biased toward basic and acidic residues: residues 479-494 and 504-514; these read KPPE…RIPD and SDEKGHMEEKL. Ser-515 carries the phosphoserine modification. Composition is skewed to polar residues over residues 558–569 and 579–591; these read ENLSPNTTSSLE and PQET…QSSL. Phosphoserine is present on residues Ser-615, Ser-618, and Ser-635. Residues 651–670 show a composition bias toward basic residues; sequence NLRRKAKGHKGPAKKKAKLT.

Belongs to the FAM169 family.

It is found in the nucleus envelope. The protein localises to the nucleus inner membrane. This Homo sapiens (Human) protein is Soluble lamin-associated protein of 75 kDa (FAM169A).